Reading from the N-terminus, the 626-residue chain is UvrABC system protein C (626 aa).

Positions 20-97 (ECSGVYKMLD…IKKFQPKFNI (78 aa)) constitute a GIY-YIG domain. The UVR domain occupies 207-242 (RELQENLSKKMQELSSQMRFEEAAEIRDRIKALSYV).

Belongs to the UvrC family. In terms of assembly, interacts with UvrB in an incision complex.

Its subcellular location is the cytoplasm. In terms of biological role, the UvrABC repair system catalyzes the recognition and processing of DNA lesions. UvrC both incises the 5' and 3' sides of the lesion. The N-terminal half is responsible for the 3' incision and the C-terminal half is responsible for the 5' incision. The polypeptide is UvrABC system protein C (Rickettsia typhi (strain ATCC VR-144 / Wilmington)).